Reading from the N-terminus, the 91-residue chain is uncharacterized protein (91 aa).

This is an uncharacterized protein from Vaccinia virus (strain Copenhagen) (VACV).